The sequence spans 449 residues: Chromosomal replication initiator protein DnaA (449 aa).

The segment at Met1–Met75 is domain I, interacts with DnaA modulators. The tract at residues Met75 to Ser106 is domain II. The domain III, AAA+ region stretch occupies residues Ser107–Ala321. Residues Gly151, Gly153, Lys154, and Thr155 each coordinate ATP. A domain IV, binds dsDNA region spans residues Asn322–His449.

This sequence belongs to the DnaA family. As to quaternary structure, oligomerizes as a right-handed, spiral filament on DNA at oriC.

The protein localises to the cytoplasm. Functionally, plays an essential role in the initiation and regulation of chromosomal replication. ATP-DnaA binds to the origin of replication (oriC) to initiate formation of the DNA replication initiation complex once per cell cycle. Binds the DnaA box (a 9 base pair repeat at the origin) and separates the double-stranded (ds)DNA. Forms a right-handed helical filament on oriC DNA; dsDNA binds to the exterior of the filament while single-stranded (ss)DNA is stabiized in the filament's interior. The ATP-DnaA-oriC complex binds and stabilizes one strand of the AT-rich DNA unwinding element (DUE), permitting loading of DNA polymerase. After initiation quickly degrades to an ADP-DnaA complex that is not apt for DNA replication. Binds acidic phospholipids. The chain is Chromosomal replication initiator protein DnaA from Helicobacter acinonychis (strain Sheeba).